The sequence spans 136 residues: Large ribosomal subunit protein uL16 (136 aa).

The protein belongs to the universal ribosomal protein uL16 family. In terms of assembly, part of the 50S ribosomal subunit.

Binds 23S rRNA and is also seen to make contacts with the A and possibly P site tRNAs. The chain is Large ribosomal subunit protein uL16 from Ruthia magnifica subsp. Calyptogena magnifica.